The chain runs to 388 residues: Na(+)/H(+) antiporter NhaA (388 aa).

The Cytoplasmic segment spans residues 1-11 (MKHLHRFFSSD). A helical membrane pass occupies residues 12 to 31 (ASGGIILIIAAILAMIMANS). At 32–58 (GATSGWYHDFLETPVQLRVGSLEINKN) the chain is on the periplasmic side. The interval 45-58 (PVQLRVGSLEINKN) is important for dimerization. Residues 59–80 (MLLWINDALMAVFFLLVGLEVK) traverse the membrane as a helical segment. At 81–96 (RELMQGSLASLRQAAF) the chain is on the cytoplasmic side. A helical transmembrane segment spans residues 97–116 (PVIAAIGGMIVPALLYLAFN). The Periplasmic segment spans residues 117 to 122 (YADPIT). The chain crosses the membrane as a helical span at residues 123 to 130 (REGWAIPA). At 131-154 (ATDIAFALGVLALLGSRVPLALKI) the chain is on the cytoplasmic side. Residues 155–176 (FLMALAIIDDLGAIIIIALFYT) form a helical membrane-spanning segment. Topologically, residues 177–180 (NDLS) are periplasmic. Residues 181-200 (MASLGVAAVAIAVLAVLNLC) form a helical membrane-spanning segment. Residues 201–204 (GARR) lie on the Cytoplasmic side of the membrane. Residues 205-222 (TGVYILVGVVLWTAVLKS) traverse the membrane as a helical segment. Residue glycine 223 is a topological domain, periplasmic. A helical membrane pass occupies residues 224–236 (VHATLAGVIVGFF). Residues 237 to 253 (IPLKEKHGRSPAKRLEH) lie on the Cytoplasmic side of the membrane. A helical transmembrane segment spans residues 254-272 (VLHPWVAYLILPLFAFANA). The Periplasmic segment spans residues 273-286 (GVSLQGVTLDGLTS). The helical transmembrane segment at 287-310 (ILPLGIIAGLLIGKPLGISLFCWL) threads the bilayer. Topologically, residues 311-339 (ALRLKLAHLPEGTTYQQIMVVGILCGIGF) are cytoplasmic. The helical transmembrane segment at 340–350 (TMSIFIASLAF) threads the bilayer. Over 351-357 (GSVDPEL) the chain is Periplasmic. A helical membrane pass occupies residues 358–380 (INWAKLGILVGSISSAVIGYSWL). Residues 381 to 388 (RVRLRPSV) lie on the Cytoplasmic side of the membrane.

The protein belongs to the NhaA Na(+)/H(+) (TC 2.A.33) antiporter family. Monomer. Homodimer. Under routine stress conditions, the monomeric form is fully functional. However, the dimeric form is much more efficient in conferring growth resistance under extreme stress conditions.

The protein localises to the cell inner membrane. The catalysed reaction is Na(+)(in) + 2 H(+)(out) = Na(+)(out) + 2 H(+)(in). The enzyme catalyses Li(+)(in) + 2 H(+)(out) = Li(+)(out) + 2 H(+)(in). With respect to regulation, activity is regulated by pH. Active at alkaline pH. Activity is strongly down-regulated below pH 6.5 and a dramatic increase in activity is observed upon increase of the pH from 6.5 to 8.5. In terms of biological role, na(+)/H(+) antiporter that extrudes sodium in exchange for external protons. Plays an important role in the regulation of intracellular pH, cellular Na(+) content and cell volume. Catalyzes the exchange of 2 H(+) per Na(+). This stoichiometry applies at both neutral and alkaline pH values. In addition, can also transport lithium and is involved in lithium detoxification. Binding of the Li(+) and H(+) ligands to NhaA is coupled and antagonistic. This chain is Na(+)/H(+) antiporter NhaA, found in Escherichia coli (strain K12).